Here is a 228-residue protein sequence, read N- to C-terminus: LHFPL tetraspan subfamily member 2 protein (228 aa).

Transmembrane regions (helical) follow at residues 11-31 (MLWT…FMSA), 102-122 (IFLA…VFTM), 132-152 (IFNV…LGLI), and 181-201 (LGWA…CAVF).

This sequence belongs to the LHFP family. In terms of tissue distribution, expressed in all tissues and cell lines examined except brain and peripheral blood leukocytes.

Its subcellular location is the membrane. Plays a role in female and male fertility. Involved in distal reproductive tract development. The protein is LHFPL tetraspan subfamily member 2 protein of Homo sapiens (Human).